The chain runs to 1282 residues: Protein crumbs homolog 2 (1282 aa).

The first 35 residues, 1 to 35 (MALVGPRIWGPRRDIYPLLLLLLLLLLLLLPWVPA), serve as a signal peptide directing secretion. Topologically, residues 36–1221 (GLVPPETPSV…PLPLPFPLLE (1186 aa)) are extracellular. Residues 71–110 (ELGGCATQPCHHGALCVPQGPDPNSFRCYCVPGFQGPHCE) form the EGF-like 1 domain. Intrachain disulfides connect Cys-75/Cys-86, Cys-80/Cys-98, Cys-100/Cys-109, Cys-116/Cys-127, Cys-121/Cys-136, Cys-138/Cys-147, Cys-154/Cys-165, Cys-159/Cys-174, Cys-176/Cys-185, Cys-192/Cys-203, Cys-197/Cys-212, Cys-214/Cys-224, Cys-231/Cys-242, Cys-236/Cys-251, Cys-253/Cys-262, Cys-269/Cys-280, Cys-274/Cys-310, Cys-312/Cys-321, Cys-328/Cys-339, Cys-333/Cys-348, Cys-350/Cys-359, Cys-366/Cys-377, Cys-371/Cys-386, Cys-388/Cys-397, Cys-404/Cys-415, Cys-409/Cys-428, and Cys-430/Cys-439. One can recognise an EGF-like 2; calcium-binding domain in the interval 112 to 148 (DIDECASRPCQHGGTCQNLADHYECHCPLGYAGVTCE). Residues 150–186 (EVDECSSAPCLHGGSCLDGVGSYRCVCAPGYAGANCQ) enclose the EGF-like 3; calcium-binding domain. The EGF-like 4; calcium-binding domain occupies 188–225 (DVDECQSQPCAHGGVCHDLVNGFRCDCADTGYEGARCE). 2 EGF-like domains span residues 227–263 (EVLE…ERCE) and 265–322 (DEDE…NDCS). Asn-239 carries an N-linked (GlcNAc...) asparagine glycan. Ser-271 is a glycosylation site (O-linked (Glc...) serine). The EGF-like 7; calcium-binding domain occupies 324–360 (DVDECASGPCLNGGSCQDLPNGFQCYCQDGYTGLTCQ). In terms of domain architecture, EGF-like 8; calcium-binding spans 362–398 (DMDECQSEPCLHGGTCSDTVAGYICQCPEAWGGHDCS). Residues 400-440 (QLTGCQGHTCPLAATCIPTFKSGLHGYFCRCPPGTYGPFCG) form the EGF-like 9 domain. Residue Asn-442 is glycosylated (N-linked (GlcNAc...) asparagine). Residues 444–607 (TFSVVSGSSV…ELKGTVLLGC (164 aa)) enclose the Laminin G-like 1 domain. Disulfide bonds link Cys-583–Cys-607, Cys-613–Cys-624, Cys-618–Cys-633, and Cys-635–Cys-644. The 37-residue stretch at 609-645 (RREPCQPLPCAHGGACVDLWTHFRCDCPRPYRGATCT) folds into the EGF-like 10 domain. Residues 649–808 (PAATFGLGGA…GQSSNLTQGC (160 aa)) form the Laminin G-like 2 domain. N-linked (GlcNAc...) asparagine glycosylation is found at Asn-672, Asn-693, Asn-789, and Asn-803. 4 disulfide bridges follow: Cys-769–Cys-808, Cys-814–Cys-825, Cys-819–Cys-834, and Cys-836–Cys-845. The 37-residue stretch at 810 to 846 (SEDTCNPNPCFNGGTCHVTWNDFYCTCSENFTGPTCA) folds into the EGF-like 11 domain. Asn-839, Asn-889, Asn-929, and Asn-1006 each carry an N-linked (GlcNAc...) asparagine glycan. Residues 872-1051 (VAEATFREGP…PGSPAVSLGC (180 aa)) form the Laminin G-like 3 domain. 13 cysteine pairs are disulfide-bonded: Cys-1010–Cys-1051, Cys-1057–Cys-1068, Cys-1062–Cys-1077, Cys-1079–Cys-1088, Cys-1095–Cys-1105, Cys-1100–Cys-1115, Cys-1117–Cys-1126, Cys-1135–Cys-1147, Cys-1141–Cys-1156, Cys-1158–Cys-1167, Cys-1174–Cys-1185, Cys-1179–Cys-1194, and Cys-1196–Cys-1205. EGF-like domains lie at 1053–1089 (GGPV…PRCE), 1091–1127 (RADP…PRCR), 1131–1168 (LPQG…LRCQ), and 1170–1206 (LDKP…QFCE). N-linked (GlcNAc...) asparagine glycans are attached at residues Asn-1138 and Asn-1155. The chain crosses the membrane as a helical span at residues 1222-1242 (VAVPAACACLLLLLLGLLSGI). Over 1243-1282 (LAARKRRQSEGTYSPSQQEVAGARLEMDSVLKVPPEERLI) the chain is Cytoplasmic. The interval 1246–1282 (RKRRQSEGTYSPSQQEVAGARLEMDSVLKVPPEERLI) is interaction with EPB41L5.

It belongs to the Crumbs protein family. In terms of assembly, interacts (via intracellular domain) with EPB41L5. Post-translationally, O-glucosylated by POGLUT1 at Ser-271; consists of an O-glucose trisaccharide, in which the O-glucose is elongated by the addition of two xylose residues. O-glucosylation is required for localization at the plasma membrane. As to expression, in the adult eye, strongly expressed in the outer nuclear layer, containing the cell bodies of the photoreceptor cells, and in the inner nuclear layer, containing the cell bodies of the horizontal, bipolar, amacrine, and Mueller glial cells. Also expressed in some cells in the ganglion cell layer (or may be displaced amacrine cells rather than ganglion cells).

Its subcellular location is the apical cell membrane. Apical polarity protein that plays a central role during the epithelial-to-mesenchymal transition (EMT) at gastrulation, when newly specified mesodermal cells move inside the embryo. Acts by promoting cell ingression, the process by which cells leave the epithelial epiblast and move inside the embryo to form a new tissue layer. The anisotropic distribution of CRB2 and MYH10/myosin-IIB at cell edges define which cells will ingress: cells with high apical CRB2 are probably extruded from the epiblast by neighboring cells with high levels of apical MYH10/myosin-IIB. Also required for maintenance of the apical polarity complex during development of the cortex. The chain is Protein crumbs homolog 2 from Mus musculus (Mouse).